The chain runs to 192 residues: Cytidylate kinase (192 aa).

12–20 contacts ATP; it reads GLAGSGTTT.

The protein belongs to the cytidylate kinase family. Type 2 subfamily.

The protein localises to the cytoplasm. The enzyme catalyses CMP + ATP = CDP + ADP. It catalyses the reaction dCMP + ATP = dCDP + ADP. This Pyrococcus horikoshii (strain ATCC 700860 / DSM 12428 / JCM 9974 / NBRC 100139 / OT-3) protein is Cytidylate kinase (cmk).